We begin with the raw amino-acid sequence, 390 residues long: GTPase Obg (390 aa).

The 159-residue stretch at 1–159 (MKFIDESLIR…RDLLLELMLL (159 aa)) folds into the Obg domain. The region spanning 160–333 (ADVGMLGLPN…LCRDIMDFII (174 aa)) is the OBG-type G domain. Residues 166 to 173 (GLPNAGKS), 191 to 195 (FTTLV), 213 to 216 (DIPG), 283 to 286 (NKID), and 314 to 316 (SAA) each bind GTP. Positions 173 and 193 each coordinate Mg(2+). The disordered stretch occupies residues 363–382 (EHQFDDDEDWDDDWSEEDDE). Residues 366–382 (FDDDEDWDDDWSEEDDE) show a composition bias toward acidic residues.

Belongs to the TRAFAC class OBG-HflX-like GTPase superfamily. OBG GTPase family. In terms of assembly, monomer. Requires Mg(2+) as cofactor.

The protein resides in the cytoplasm. An essential GTPase which binds GTP, GDP and possibly (p)ppGpp with moderate affinity, with high nucleotide exchange rates and a fairly low GTP hydrolysis rate. Plays a role in control of the cell cycle, stress response, ribosome biogenesis and in those bacteria that undergo differentiation, in morphogenesis control. This is GTPase Obg from Haemophilus influenzae (strain ATCC 51907 / DSM 11121 / KW20 / Rd).